Consider the following 135-residue polypeptide: Sex-regulated protein janus-A (135 aa).

Lys37 serves as a coordination point for substrate. The active-site Proton acceptor is His63. 104–106 serves as a coordination point for substrate; it reads SQG.

This sequence belongs to the janus family.

Its function is as follows. JanA and janB regulate somatic sex differentiation. The sequence is that of Sex-regulated protein janus-A (janA) from Drosophila simulans (Fruit fly).